Consider the following 260-residue polypeptide: Thiazole synthase (260 aa).

The Schiff-base intermediate with DXP role is filled by Lys-96. Residues Gly-157, 184 to 185 (AG), and 206 to 207 (NT) each bind 1-deoxy-D-xylulose 5-phosphate.

The protein belongs to the ThiG family. Homotetramer. Forms heterodimers with either ThiH or ThiS.

The protein localises to the cytoplasm. The catalysed reaction is [ThiS sulfur-carrier protein]-C-terminal-Gly-aminoethanethioate + 2-iminoacetate + 1-deoxy-D-xylulose 5-phosphate = [ThiS sulfur-carrier protein]-C-terminal Gly-Gly + 2-[(2R,5Z)-2-carboxy-4-methylthiazol-5(2H)-ylidene]ethyl phosphate + 2 H2O + H(+). It functions in the pathway cofactor biosynthesis; thiamine diphosphate biosynthesis. Its function is as follows. Catalyzes the rearrangement of 1-deoxy-D-xylulose 5-phosphate (DXP) to produce the thiazole phosphate moiety of thiamine. Sulfur is provided by the thiocarboxylate moiety of the carrier protein ThiS. In vitro, sulfur can be provided by H(2)S. The chain is Thiazole synthase from Rhodopseudomonas palustris (strain ATCC BAA-98 / CGA009).